A 125-amino-acid chain; its full sequence is Histone H2A (125 aa).

Over residues Met-1 to Ser-18 the composition is skewed to basic residues. Residues Met-1–Leu-23 are disordered. Position 2 is an N-acetylserine (Ser-2). Residue Ser-2 is modified to Phosphoserine. At Gln-104 the chain carries N5-methylglutamine.

This sequence belongs to the histone H2A family. The nucleosome is a histone octamer containing two molecules each of H2A, H2B, H3 and H4 assembled in one H3-H4 heterotetramer and two H2A-H2B heterodimers. The octamer wraps approximately 147 bp of DNA.

It localises to the nucleus. The protein resides in the chromosome. Its function is as follows. Core component of nucleosome. Nucleosomes wrap and compact DNA into chromatin, limiting DNA accessibility to the cellular machineries which require DNA as a template. Histones thereby play a central role in transcription regulation, DNA repair, DNA replication and chromosomal stability. DNA accessibility is regulated via a complex set of post-translational modifications of histones, also called histone code, and nucleosome remodeling. The polypeptide is Histone H2A (Urechis caupo (Innkeeper worm)).